The sequence spans 94 residues: Defensin alpha 5 (94 aa).

The N-terminal stretch at 1–19 is a signal peptide; the sequence is MRTIAILAAILLVALQAQA. 3 disulfides stabilise this stretch: Cys-65-Cys-93, Cys-67-Cys-82, and Cys-72-Cys-92.

Belongs to the alpha-defensin family. Homodimer. Homotetramer. Interacts with B.antracis lef/lethal factor. Post-translationally, glycosylated. Proteolytically cleaved at Arg-62 by trypsin. Both the propeptide form proHD5/HD5(20-94) and HD5(56-94) are cleaved into the lumenal peptide form HD5(63-94) by trypsin. Unprocessed proHD5 exerts antimicrobial activities, but peptide potency is enhanced by peptide processing. Proteolytically cleaved in duodenal fluid; derived fragments are antimicrobially active against commensal bacteria (in vitro). In terms of processing, (Microbial infection) The disulfide bridges and homodimerization are a prerequisite for the enhancement of S.flexneri adhesion and invasion. As to expression, expressed in the gastrointestinal, reproductive, and urinary tracts (at protein level). Expressed in Paneth cells of the small intestine (at protein level). Expressed throughout the urothelium of the lower urinary tract and in the collecting tubules of the kidney (at protein level). Expressed in stratified squamous epithelial cells of the female genital tract epithelia, such as in vagina, ectocervix, endocervix, endometrium, and fallopian tube (at protein level). Endometrial expression correlates with stages of the menstrual cycle: Expression is low during the early proliferative phase, increased during the mid- to late proliferative phase, peaks during the early secretory phase of the cycle, and decreases during the mid- to late secretory phase.

It localises to the secreted. It is found in the cytoplasmic vesicle. The protein localises to the secretory vesicle. Its function is as follows. Host-defense peptide that maintains sterility in the urogenital system. Has antimicrobial activity against a wide range of bacteria, including Gram-negative E.coli, P.aeruginosa and S.typhimurium, and Gram-positive E.aerogenes, S.aureus, B.cereus, E.faecium and L.monocytogenes. Confers resistance to intestinal infection by S.typhimurium. Exhibits antimicrobial activity against enteric commensal bacteria such as B.adolescentis, L.acidophilus, B.breve, L.fermentum, B.longum and S.thermophilus. Binds to bacterial membranes and causes membrane disintegration. Induces the secretion of the chemokine IL-8 by intestinal epithelial cells. Binds to B.antracis lef/lethal factor, a major virulence factor from B.anthracis, and neutralizes its enzymatic activity. (Microbial infection) Acts as a target for S.flexneri infection by binding to the bacterium, possibly via bacterial surface proteins, and thereby augmenting infectivity via enhanced bacterial adhesion and invasion of epithelial cells and tissues. The polypeptide is Defensin alpha 5 (DEFA5) (Homo sapiens (Human)).